The following is a 1048-amino-acid chain: Putative cation efflux system protein SilA (1048 aa).

14 helical membrane passes run 14–34 (FLVM…IINT), 125–145 (VSSE…YALV), 338–358 (LSSK…LFLW), 363–383 (ALVA…VMHF), 391–411 (MSLG…IVMI), 446–466 (VGPA…PIFT), 485–505 (SMAG…GFWI), 539–559 (TLLV…QVGG), 737–757 (GMTV…AMVG), 871–891 (KLKL…YLAF), 897–917 (ALLI…FLYW), 928–948 (TGFI…LMYL), 985–1005 (AMTV…TGAG), and 1012–1032 (IAAP…FIIP).

Belongs to the resistance-nodulation-cell division (RND) (TC 2.A.6) family.

The protein localises to the cell inner membrane. In terms of biological role, component of the sil cation-efflux system that confers resistance to silver. May be part of a three-component cation/proton antiporter. In Salmonella typhimurium, this protein is Putative cation efflux system protein SilA (silA).